Consider the following 360-residue polypeptide: Phospho-N-acetylmuramoyl-pentapeptide-transferase (360 aa).

Helical transmembrane passes span 21 to 41, 71 to 91, 94 to 114, 142 to 162, 168 to 188, 199 to 219, 236 to 256, 263 to 283, 288 to 308, and 338 to 358; these read YLTFRAIMSILTGLGFALWIG, TPTMGGIMILLSIFLSVILWA, SNPYVWVVLFVLVSFGTIGFI, LVVAFFLYATATTDAQTVLVV, IMPQLGLLFILMTYFVIVGAS, GLAIMPTVMVAAGFALIAWAT, ASELMVICTAIIGAGLGFLWF, VFMGDVGSLALGAILGIIAVL, FLLFIMGGVFVMETMSVILQV, and VIVRFWIITLVLVLLGLVTLK.

Belongs to the glycosyltransferase 4 family. MraY subfamily. Mg(2+) serves as cofactor.

It is found in the cell inner membrane. The catalysed reaction is UDP-N-acetyl-alpha-D-muramoyl-L-alanyl-gamma-D-glutamyl-meso-2,6-diaminopimeloyl-D-alanyl-D-alanine + di-trans,octa-cis-undecaprenyl phosphate = di-trans,octa-cis-undecaprenyl diphospho-N-acetyl-alpha-D-muramoyl-L-alanyl-D-glutamyl-meso-2,6-diaminopimeloyl-D-alanyl-D-alanine + UMP. The protein operates within cell wall biogenesis; peptidoglycan biosynthesis. Functionally, catalyzes the initial step of the lipid cycle reactions in the biosynthesis of the cell wall peptidoglycan: transfers peptidoglycan precursor phospho-MurNAc-pentapeptide from UDP-MurNAc-pentapeptide onto the lipid carrier undecaprenyl phosphate, yielding undecaprenyl-pyrophosphoryl-MurNAc-pentapeptide, known as lipid I. The polypeptide is Phospho-N-acetylmuramoyl-pentapeptide-transferase (Tolumonas auensis (strain DSM 9187 / NBRC 110442 / TA 4)).